A 242-amino-acid polypeptide reads, in one-letter code: MSDLTVVKGLQSEIYVPITPPPVWTPVTKELKDMTVALVTAAGVHMKADKRFNLAGDFSFRVIPGDASVNDMMVSHGGYDNGDVNKDINCMFPIDPMRTLAKEGFIKALAPINIGFMGGGGDQKKFSEETGPEIARQLKEEGVDAVLLTAGUGTCHRSAVIVQRAIEESGIPTIIIAALPPVVRQNGTPRAVAPLVPMGANAGEPNNPEMQKAICTDSLKQLVEIPSAGKIVPLPYEYVAKV.

The Nucleophile role is filled by selenocysteine 152. Residue selenocysteine 152 is a non-standard amino acid, selenocysteine.

Consists of 3 subunits of 23, 26 and 45 kDa (alpha, gamma and beta respectively). The molecular weight of the complex is approximately 870 kDa, suggesting a decameric structure, if all 3 subunits are present in equal stoichiometry. In terms of processing, this subunit is carbonylated in vitro on an unidentified residue.

It is found in the cytoplasm. The catalysed reaction is [PrdC protein]-Se-L-selenocysteinyl-S-L-cysteine + 5-aminopentanoate = [PrdC protein]-L-selenocysteine/L-cysteine + D-proline. Its function is as follows. D-proline reductase catalyzes the reductive cleavage of a C-N bond in D-proline resulting in the formation of 5-aminovalerate. The alpha subunit has been shown to bind D-proline, presumably via the pyruvoyl group. The chain is D-proline reductase subunit gamma (prdB) from Acetoanaerobium sticklandii (strain ATCC 12662 / DSM 519 / JCM 1433 / CCUG 9281 / NCIMB 10654 / HF) (Clostridium sticklandii).